The chain runs to 213 residues: Imidazole glycerol phosphate synthase subunit HisH (213 aa).

The region spanning 4–213 (SIAIVDYGMG…LYRNFVHWNP (210 aa)) is the Glutamine amidotransferase type-1 domain. Residue C83 is the Nucleophile of the active site. Active-site residues include H193 and E195.

As to quaternary structure, heterodimer of HisH and HisF.

The protein localises to the cytoplasm. The enzyme catalyses 5-[(5-phospho-1-deoxy-D-ribulos-1-ylimino)methylamino]-1-(5-phospho-beta-D-ribosyl)imidazole-4-carboxamide + L-glutamine = D-erythro-1-(imidazol-4-yl)glycerol 3-phosphate + 5-amino-1-(5-phospho-beta-D-ribosyl)imidazole-4-carboxamide + L-glutamate + H(+). It carries out the reaction L-glutamine + H2O = L-glutamate + NH4(+). It functions in the pathway amino-acid biosynthesis; L-histidine biosynthesis; L-histidine from 5-phospho-alpha-D-ribose 1-diphosphate: step 5/9. In terms of biological role, IGPS catalyzes the conversion of PRFAR and glutamine to IGP, AICAR and glutamate. The HisH subunit catalyzes the hydrolysis of glutamine to glutamate and ammonia as part of the synthesis of IGP and AICAR. The resulting ammonia molecule is channeled to the active site of HisF. The protein is Imidazole glycerol phosphate synthase subunit HisH of Burkholderia pseudomallei (strain K96243).